We begin with the raw amino-acid sequence, 397 residues long: MQFSLATLTTLLAFVAAAPANKGFVHAPIKKQSLQAAQSKIPNFASSGPITAELYNELMAYQVQISLGGQTISASIDTGSEILWVWENDSIACQVDQQDCDTDGSYNPKKSSTSKDTGVPFNINYGKGHADGYLYTDNAVIGGASAPGFKFGVNSGDLSSGGFSMVFGIGVNSDASTSISAQLQKSGEISRNLYGMSFSDANLAGTSNDNSEITFGAINTGRYTGSLKTIPRVATQGGYQHFSVSASGKFGDVDLFDNDLVILDSGTTMTYLKSDYYNAFLGGLEDLDITLSDYSGGWHGYPCSENSKINFTYNFSGKEITVTGHDLAIPGNAVNSNVDSSVCFMGVDDGGNMNLFGDTFLRAIYSVYDLERDEVSIAQAAHGKPDNYVVITGDVPN.

A signal peptide spans 1-17; it reads MQFSLATLTTLLAFVAA. The 318-residue stretch at 61–378 folds into the Peptidase A1 domain; the sequence is YQVQISLGGQ…DLERDEVSIA (318 aa). Residue D77 is part of the active site. N-linked (GlcNAc...) asparagine glycosylation is present at N88. A disulfide bond links C93 and C100. D264 is an active-site residue. A disulfide bridge links C303 with C343. Residues N310 and N314 are each glycosylated (N-linked (GlcNAc...) asparagine).

This sequence belongs to the peptidase A1 family.

The protein resides in the secreted. The chain is Acid extracellular protease (AXP1) from Yarrowia lipolytica (strain CLIB 122 / E 150) (Yeast).